Consider the following 154-residue polypeptide: Endoribonuclease YbeY (154 aa).

His-113, His-117, and His-123 together coordinate Zn(2+).

Belongs to the endoribonuclease YbeY family. Requires Zn(2+) as cofactor.

It localises to the cytoplasm. Functionally, single strand-specific metallo-endoribonuclease involved in late-stage 70S ribosome quality control and in maturation of the 3' terminus of the 16S rRNA. The protein is Endoribonuclease YbeY of Ehrlichia canis (strain Jake).